The following is an 83-amino-acid chain: Small ribosomal subunit protein bS20 (83 aa).

The segment at 1–21 (MPNIKSAIKRVRTTETAEERN) is disordered. The segment covering 12 to 21 (RTTETAEERN) has biased composition (basic and acidic residues).

Belongs to the bacterial ribosomal protein bS20 family.

In terms of biological role, binds directly to 16S ribosomal RNA. This chain is Small ribosomal subunit protein bS20, found in Staphylococcus epidermidis (strain ATCC 35984 / DSM 28319 / BCRC 17069 / CCUG 31568 / BM 3577 / RP62A).